We begin with the raw amino-acid sequence, 900 residues long: Probable dipeptidyl-aminopeptidase B (900 aa).

The interval 1–83 (MARTDQGLGA…DILSHPRDKS (83 aa)) is disordered. The Cytoplasmic portion of the chain corresponds to 1-90 (MARTDQGLGA…DKSKRSRGSR (90 aa)). Over residues 24-39 (NSFSSTDSLSTDGSLF) the composition is skewed to low complexity. The span at 44–55 (NATQFQKSTQLP) shows a compositional bias: polar residues. A helical; Signal-anchor for type II membrane protein membrane pass occupies residues 91 to 111 (WIWVIGLLCLGGWILAFILFW). Residues 112–900 (GRRNNNSDIS…HHVGSALAAT (789 aa)) are Vacuolar-facing. N-linked (GlcNAc...) asparagine glycosylation is found at N150, N195, N348, N410, N514, N639, and N644. The active-site Charge relay system is the S753. A glycan (N-linked (GlcNAc...) asparagine) is linked at N812. Residues D830 and H863 each act as charge relay system in the active site.

Belongs to the peptidase S9B family.

Its subcellular location is the vacuole membrane. The enzyme catalyses Release of an N-terminal dipeptide, Xaa-Yaa-|-Zaa-, from a polypeptide, preferentially when Yaa is Pro, provided Zaa is neither Pro nor hydroxyproline.. Functionally, type IV dipeptidyl-peptidase which removes N-terminal dipeptides sequentially from polypeptides having unsubstituted N-termini provided that the penultimate residue is proline. This chain is Probable dipeptidyl-aminopeptidase B (dapB), found in Talaromyces stipitatus (strain ATCC 10500 / CBS 375.48 / QM 6759 / NRRL 1006) (Penicillium stipitatum).